Reading from the N-terminus, the 315-residue chain is Methionyl-tRNA formyltransferase (315 aa).

113–116 (SLLP) contacts (6S)-5,6,7,8-tetrahydrofolate.

The protein belongs to the Fmt family.

The catalysed reaction is L-methionyl-tRNA(fMet) + (6R)-10-formyltetrahydrofolate = N-formyl-L-methionyl-tRNA(fMet) + (6S)-5,6,7,8-tetrahydrofolate + H(+). Its function is as follows. Attaches a formyl group to the free amino group of methionyl-tRNA(fMet). The formyl group appears to play a dual role in the initiator identity of N-formylmethionyl-tRNA by promoting its recognition by IF2 and preventing the misappropriation of this tRNA by the elongation apparatus. The sequence is that of Methionyl-tRNA formyltransferase from Shigella boydii serotype 4 (strain Sb227).